We begin with the raw amino-acid sequence, 115 residues long: NADH-ubiquinone oxidoreductase chain 3 (115 aa).

A run of 3 helical transmembrane segments spans residues 5–25 (TALL…FWFF), 55–75 (FFLV…LLPL), and 86–106 (IMML…AYEW).

It belongs to the complex I subunit 3 family. Core subunit of respiratory chain NADH dehydrogenase (Complex I) which is composed of 45 different subunits. Interacts with TMEM186. Interacts with TMEM242.

The protein localises to the mitochondrion inner membrane. The enzyme catalyses a ubiquinone + NADH + 5 H(+)(in) = a ubiquinol + NAD(+) + 4 H(+)(out). Its function is as follows. Core subunit of the mitochondrial membrane respiratory chain NADH dehydrogenase (Complex I) which catalyzes electron transfer from NADH through the respiratory chain, using ubiquinone as an electron acceptor. Essential for the catalytic activity of complex I. The chain is NADH-ubiquinone oxidoreductase chain 3 from Peromyscus sejugis (Santa Cruz mouse).